The sequence spans 281 residues: uncharacterized protein (281 aa).

The protein localises to the plastid. It is found in the chloroplast. This is an uncharacterized protein from Euglena gracilis.